The sequence spans 337 residues: Terpene synthase 4 (337 aa).

D94 and D98 together coordinate Mg(2+). A D(D/E)XX(D/E) motif motif is present at residues 94-98 (DDIFD). R195 provides a ligand contact to substrate. Mg(2+) is bound by residues N241, S245, and E249. The NSE motif signature appears at 241–249 (NDIYSYHRE). Positions 320–327 (WSESCTRY) match the WxxxxxRY motif motif.

The protein belongs to the terpene synthase family. Mg(2+) is required as a cofactor.

It carries out the reaction (2E,6E)-farnesyl diphosphate = alpha-muurolene + diphosphate. The enzyme catalyses (2E,6E)-farnesyl diphosphate = (-)-(E)-beta-caryophyllene + diphosphate. In terms of biological role, terpene synthase that catalyzes the cyclization of farnesyl diphosphate (FPP) into alpha-muurolene, (-)-beta-caryophyllene, and one unidentified sesquiterpene. TPS4 shows only trace monoterpene synthase activity with geranyl diphosphate (GPP) as substrate and produces very small amounts of myrcene. P.polycephalum has a unique biology and these volatile terpenoids could function in internal communication of P.polycephalum, to mark the territory that have been explored, or they may be involved in chemotaxis. This Physarum polycephalum (Slime mold) protein is Terpene synthase 4.